We begin with the raw amino-acid sequence, 341 residues long: Ribosomal RNA small subunit methyltransferase C (341 aa).

This sequence belongs to the methyltransferase superfamily. RsmC family. Monomer.

The protein localises to the cytoplasm. It carries out the reaction guanosine(1207) in 16S rRNA + S-adenosyl-L-methionine = N(2)-methylguanosine(1207) in 16S rRNA + S-adenosyl-L-homocysteine + H(+). Its function is as follows. Specifically methylates the guanine in position 1207 of 16S rRNA in the 30S particle. This is Ribosomal RNA small subunit methyltransferase C from Shewanella amazonensis (strain ATCC BAA-1098 / SB2B).